The chain runs to 50 residues: Sperm protamine P1 (50 aa).

It belongs to the protamine P1 family. As to quaternary structure, cross-linked by interchain disulfide bonds around the DNA-helix. In terms of tissue distribution, testis.

The protein localises to the nucleus. It localises to the chromosome. Functionally, protamines substitute for histones in the chromatin of sperm during the haploid phase of spermatogenesis. They compact sperm DNA into a highly condensed, stable and inactive complex. The protein is Sperm protamine P1 (PRM1) of Pan paniscus (Pygmy chimpanzee).